Reading from the N-terminus, the 179-residue chain is Translation initiation factor IF-3 (179 aa).

The protein belongs to the IF-3 family. As to quaternary structure, monomer.

It is found in the cytoplasm. In terms of biological role, IF-3 binds to the 30S ribosomal subunit and shifts the equilibrium between 70S ribosomes and their 50S and 30S subunits in favor of the free subunits, thus enhancing the availability of 30S subunits on which protein synthesis initiation begins. The sequence is that of Translation initiation factor IF-3 from Buchnera aphidicola subsp. Acyrthosiphon pisum (strain APS) (Acyrthosiphon pisum symbiotic bacterium).